We begin with the raw amino-acid sequence, 80 residues long: Small ribosomal subunit protein bS18 (80 aa).

It belongs to the bacterial ribosomal protein bS18 family. Part of the 30S ribosomal subunit. Forms a tight heterodimer with protein bS6.

Binds as a heterodimer with protein bS6 to the central domain of the 16S rRNA, where it helps stabilize the platform of the 30S subunit. This Clostridium perfringens (strain ATCC 13124 / DSM 756 / JCM 1290 / NCIMB 6125 / NCTC 8237 / Type A) protein is Small ribosomal subunit protein bS18.